The following is a 120-amino-acid chain: Large ribosomal subunit protein bL17 (120 aa).

The protein belongs to the bacterial ribosomal protein bL17 family. In terms of assembly, part of the 50S ribosomal subunit. Contacts protein L32.

This is Large ribosomal subunit protein bL17 from Mycoplasmopsis pulmonis (strain UAB CTIP) (Mycoplasma pulmonis).